The sequence spans 85 residues: Anaphase-promoting complex subunit CDC26 (85 aa).

Residues 7–38 (TRLELKLDDIEEFENIRKDLETRKKQKEDVEV) adopt a coiled-coil conformation. The disordered stretch occupies residues 30-85 (KKQKEDVEVVGGSDGEGAIGLSSDPKSREQMINDRIGYKPQPKPNNRSSQFGSLEF). Serine 42 and serine 82 each carry phosphoserine. Positions 73-85 (PNNRSSQFGSLEF) are enriched in polar residues.

It belongs to the CDC26 family. In terms of assembly, V-shaped homodimer. Interacts with CDC16. The mammalian APC/C is composed at least of 14 distinct subunits ANAPC1, ANAPC2, CDC27/APC3, ANAPC4, ANAPC5, CDC16/APC6, ANAPC7, CDC23/APC8, ANAPC10, ANAPC11, CDC26/APC12, ANAPC13, ANAPC15 and ANAPC16 that assemble into a complex of at least 19 chains with a combined molecular mass of around 1.2 MDa; APC/C interacts with FZR1 and FBXO5. Interacts with FBXO43.

Its subcellular location is the nucleus. It functions in the pathway protein modification; protein ubiquitination. Its function is as follows. Component of the anaphase promoting complex/cyclosome (APC/C), a cell cycle-regulated E3 ubiquitin ligase that controls progression through mitosis and the G1 phase of the cell cycle. The APC/C complex acts by mediating ubiquitination and subsequent degradation of target proteins: it mainly mediates the formation of 'Lys-11'-linked polyubiquitin chains and, to a lower extent, the formation of 'Lys-48'- and 'Lys-63'-linked polyubiquitin chains. The APC/C complex catalyzes assembly of branched 'Lys-11'-/'Lys-48'-linked branched ubiquitin chains on target proteins. May recruit the E2 ubiquitin-conjugating enzymes to the complex. This Homo sapiens (Human) protein is Anaphase-promoting complex subunit CDC26 (CDC26).